The sequence spans 449 residues: Tryptophan synthase beta chain 2 (449 aa).

Lysine 116 carries the N6-(pyridoxal phosphate)lysine modification.

The protein belongs to the TrpB family. In terms of assembly, tetramer of two alpha and two beta chains. Pyridoxal 5'-phosphate serves as cofactor.

It catalyses the reaction (1S,2R)-1-C-(indol-3-yl)glycerol 3-phosphate + L-serine = D-glyceraldehyde 3-phosphate + L-tryptophan + H2O. Its pathway is amino-acid biosynthesis; L-tryptophan biosynthesis; L-tryptophan from chorismate: step 5/5. In terms of biological role, the beta subunit is responsible for the synthesis of L-tryptophan from indole and L-serine. The chain is Tryptophan synthase beta chain 2 (trpB2) from Aeropyrum pernix (strain ATCC 700893 / DSM 11879 / JCM 9820 / NBRC 100138 / K1).